Consider the following 487-residue polypeptide: Cytochrome P450 2C4 (487 aa).

Cysteine 432 provides a ligand contact to heme.

The protein belongs to the cytochrome P450 family. Heme serves as cofactor.

The protein localises to the endoplasmic reticulum membrane. Its subcellular location is the microsome membrane. It carries out the reaction an organic molecule + reduced [NADPH--hemoprotein reductase] + O2 = an alcohol + oxidized [NADPH--hemoprotein reductase] + H2O + H(+). In terms of biological role, cytochromes P450 are a group of heme-thiolate monooxygenases. In liver microsomes, this enzyme is involved in an NADPH-dependent electron transport pathway. It oxidizes a variety of structurally unrelated compounds, including steroids, fatty acids, and xenobiotics. The chain is Cytochrome P450 2C4 (CYP2C4) from Oryctolagus cuniculus (Rabbit).